Here is a 239-residue protein sequence, read N- to C-terminus: Mannose-binding protein A (239 aa).

An N-terminal signal peptide occupies residues 1–18 (MLLLPLLPVLLCVVSVSS). Residues 35–88 (ACGRDGRDGPKGEKGEPGQGLRGLQGPPGKLGPPGSVGSPGSPGPKGQKGDHGD) are disordered. The region spanning 37–89 (GRDGRDGPKGEKGEPGQGLRGLQGPPGKLGPPGSVGSPGSPGPKGQKGDHGDN) is the Collagen-like domain. A compositionally biased stretch (basic and acidic residues) spans 38-50 (RDGRDGPKGEKGE). The residue at position 44 (P44) is a 4-hydroxyproline. A 5-hydroxylysine mark is found at K45 and K48. K45 and K48 each carry an O-linked (Gal...) hydroxylysine glycan. A 4-hydroxyproline mark is found at P51, P62, P68, P74, and P79. Residues 58-74 (LQGPPGKLGPPGSVGSP) are compositionally biased toward low complexity. 5-hydroxylysine occurs at positions 80 and 83. O-linked (Gal...) hydroxylysine glycosylation is found at K80 and K83. One can recognise a C-type lectin domain in the interval 144-239 (SLCTELQGTV…SFKAVCEFPA (96 aa)). Intrachain disulfides connect C146–C235 and C213–C227. Residues D179, E183, E203, N205, E211, D212, N223, and D224 each coordinate Ca(2+). The calcium-dependent carbohydrate binding stretch occupies residues 203–211 (EPNNHGSGE).

Homotrimer. Forms higher oligomeric complexes formed by the association of two, three or more homotrimers. Oligomerization occurs in the endoplasmic reticulum. Interacts with MASP1 and MASP2. Hydroxylated on lysine and proline residues within the collagen-like domain. In terms of processing, O-glycosylated. O-linked glycans on hydroxylysine residues consist of Glc-Gal disaccharides bound to the oxygen atom of post-translationally added hydroxyl groups. In terms of tissue distribution, detected in liver and blood serum (at protein level). Detected in liver.

It is found in the secreted. In terms of biological role, calcium-dependent lectin. Plays a role in the innate immune response by binding mannose, fucose and N-acetylglucosamine moieties on different microorganisms and mediating activation of the lectin complement pathway. Binds to late apoptotic cells, as well as to apoptotic blebs and to necrotic cells, but not to early apoptotic cells, facilitating their uptake by macrophages. In Mus musculus (Mouse), this protein is Mannose-binding protein A (Mbl1).